Here is a 229-residue protein sequence, read N- to C-terminus: Deleted in azoospermia-like (229 aa).

Residues Asn47–Arg128 enclose the RRM domain. A DAZ domain is found at Pro172–Gln198.

Belongs to the RRM DAZ family. As to expression, testis and ovary specific. In ovary, it is localized in the cortex of oocytes. At the onset of embryogenesis, maternal product is located at the vegetal pole, before migrating toward blastomeres through cytoplasmic streams as early embryogenesis proceededs.

It localises to the cytoplasm. Its function is as follows. RNA-binding protein involved in gametogenesis in both males and females. Acts by binding to the 3'-UTR of mRNA, specifically recognizing GUU triplets, and promoting the translation of key transcripts. Establishes oocyte polarity through interaction with Bucky ball (BUC). Interacts with Bucky ball (BUC) mRNA to mediate Balbiani body formation and oocyte polarity during early oogenesis. In Danio rerio (Zebrafish), this protein is Deleted in azoospermia-like (dazl).